The sequence spans 234 residues: Chalcone--flavanone isomerase 1 (234 aa).

Residues Thr-50, Asn-115, and Ser-192 each contribute to the substrate site.

Belongs to the chalcone isomerase family.

It carries out the reaction a chalcone = a flavanone.. It participates in secondary metabolite biosynthesis; flavonoid biosynthesis. Catalyzes the intramolecular cyclization of bicyclic chalcones into tricyclic (S)-flavanones. Responsible for the isomerization of 4,2',4',6'-tetrahydroxychalcone (also termed chalcone) into naringenin. The sequence is that of Chalcone--flavanone isomerase 1 (CHI1) from Vitis vinifera (Grape).